We begin with the raw amino-acid sequence, 191 residues long: Threonylcarbamoyl-AMP synthase (191 aa).

The YrdC-like domain maps to 10 to 191 (PFRVRHAAAE…DGRSGAYLRR (182 aa)).

Belongs to the SUA5 family. TsaC subfamily.

The protein resides in the cytoplasm. The enzyme catalyses L-threonine + hydrogencarbonate + ATP = L-threonylcarbamoyladenylate + diphosphate + H2O. Its function is as follows. Required for the formation of a threonylcarbamoyl group on adenosine at position 37 (t(6)A37) in tRNAs that read codons beginning with adenine. Catalyzes the conversion of L-threonine, HCO(3)(-)/CO(2) and ATP to give threonylcarbamoyl-AMP (TC-AMP) as the acyladenylate intermediate, with the release of diphosphate. The protein is Threonylcarbamoyl-AMP synthase of Halorhodospira halophila (strain DSM 244 / SL1) (Ectothiorhodospira halophila (strain DSM 244 / SL1)).